The sequence spans 394 residues: Succinate--CoA ligase [ADP-forming] subunit beta (394 aa).

Positions 9-243 (KDILAGFGIA…YSQLNPLEIA (235 aa)) constitute an ATP-grasp domain. Residues Lys-45, 52–54 (GRG), Glu-98, Val-101, and Glu-106 contribute to the ATP site. Mg(2+) is bound by residues Asn-198 and Asp-212. Substrate is bound by residues Asn-263 and 320-322 (GIM).

The protein belongs to the succinate/malate CoA ligase beta subunit family. Heterotetramer of two alpha and two beta subunits. Mg(2+) serves as cofactor.

It carries out the reaction succinate + ATP + CoA = succinyl-CoA + ADP + phosphate. It catalyses the reaction GTP + succinate + CoA = succinyl-CoA + GDP + phosphate. It participates in carbohydrate metabolism; tricarboxylic acid cycle; succinate from succinyl-CoA (ligase route): step 1/1. Succinyl-CoA synthetase functions in the citric acid cycle (TCA), coupling the hydrolysis of succinyl-CoA to the synthesis of either ATP or GTP and thus represents the only step of substrate-level phosphorylation in the TCA. The beta subunit provides nucleotide specificity of the enzyme and binds the substrate succinate, while the binding sites for coenzyme A and phosphate are found in the alpha subunit. This chain is Succinate--CoA ligase [ADP-forming] subunit beta, found in Pelobacter propionicus (strain DSM 2379 / NBRC 103807 / OttBd1).